The following is a 527-amino-acid chain: Peptide chain release factor 3 (527 aa).

The region spanning 9-277 (AKRRTFAIIS…AVVDWAPRPL (269 aa)) is the tr-type G domain. GTP contacts are provided by residues 18-25 (SHPDAGKT), 86-90 (DTPGH), and 140-143 (NKLD).

This sequence belongs to the TRAFAC class translation factor GTPase superfamily. Classic translation factor GTPase family. PrfC subfamily.

It localises to the cytoplasm. Functionally, increases the formation of ribosomal termination complexes and stimulates activities of RF-1 and RF-2. It binds guanine nucleotides and has strong preference for UGA stop codons. It may interact directly with the ribosome. The stimulation of RF-1 and RF-2 is significantly reduced by GTP and GDP, but not by GMP. The chain is Peptide chain release factor 3 from Pseudomonas putida (strain W619).